A 2771-amino-acid chain; its full sequence is Teneurin-4 (2771 aa).

A compositionally biased stretch (basic and acidic residues) spans Met1 to Tyr22. A disordered region spans residues Met1–Leu45. The Teneurin N-terminal domain maps to Met1–Cys341. Over Met1–Ser345 the chain is Cytoplasmic. The residue at position 124 (Ser124) is a Phosphoserine. The disordered stretch occupies residues Trp132 to Thr233. Positions Arg134–Thr155 are enriched in low complexity. Over residues Asp156–His166 the composition is skewed to basic and acidic residues. Thr178 bears the Phosphothreonine mark. The span at Gln191–Pro211 shows a compositional bias: polar residues. The helical transmembrane segment at Ala346–Phe366 threads the bilayer. Residues Gly367–Arg2771 are Extracellular-facing. The interval Ser403 to Pro428 is disordered. Basic and acidic residues predominate over residues Thr410–Ala419. N-linked (GlcNAc...) asparagine glycosylation occurs at Asn469. A disordered region spans residues Ala509–His528. EGF-like domains follow at residues Ser564–Gly595, Arg596–Asp626, Pro628–Glu660, Glu661–Glu692, Pro694–Ser727, Ile728–Gln759, Arg760–Thr789, and Ile790–Asp833. 22 disulfide bridges follow: Cys568-Cys578, Cys572-Cys583, Cys585-Cys594, Cys603-Cys614, Cys616-Cys625, Cys632-Cys643, Cys637-Cys648, Cys650-Cys659, Cys664-Cys675, Cys669-Cys680, Cys682-Cys691, Cys702-Cys715, Cys717-Cys726, Cys731-Cys741, Cys735-Cys746, Cys748-Cys757, Cys762-Cys772, Cys766-Cys777, Cys779-Cys788, Cys802-Cys812, Cys806-Cys821, and Cys823-Cys832. N-linked (GlcNAc...) asparagine glycans are attached at residues Asn942 and Asn1261. 5 NHL repeats span residues Ser1218–Asn1261, Leu1266–Thr1310, Thr1336–Ile1380, Leu1395–Arg1446, and Cys1525–Asn1568. One copy of the YD 1 repeat lies at Tyr1578 to His1597. Asn1611 carries N-linked (GlcNAc...) asparagine glycosylation. YD repeat units follow at residues Tyr1614–Arg1634, Tyr1677–Phe1696, and Tyr1697–Arg1719. Residues Asn1707, Asn1743, Asn1801, and Asn1886 are each glycosylated (N-linked (GlcNAc...) asparagine). YD repeat units lie at residues Tyr1889–Glu1908, Tyr1930–Glu1948, Phe1949–Glu1969, Tyr1976–Asp1993, Phe1994–Lys2015, Tyr2016–Ser2033, Tyr2036–Thr2056, Tyr2059–Val2079, Tyr2087–Pro2106, Tyr2112–Tyr2129, Tyr2130–Val2156, Tyr2158–Gln2171, Tyr2172–Ser2195, Tyr2198–Ser2218, Tyr2219–Leu2239, Tyr2241–Gly2261, Tyr2273–Tyr2293, and Tyr2295–Phe2315. The N-linked (GlcNAc...) asparagine glycan is linked to Asn1987. A glycan (N-linked (GlcNAc...) asparagine) is linked at Asn2190. Asn2330 is a glycosylation site (N-linked (GlcNAc...) asparagine). The YD 23 repeat unit spans residues Tyr2341–Ile2382. The N-linked (GlcNAc...) asparagine glycan is linked to Asn2648.

The protein belongs to the tenascin family. Teneurin subfamily. Homodimer; disulfide-linked. May also form heterodimer with either TENM1 or TENM2 or TENM3. As to expression, expressed in brain and spinal cord (at protein level). Expressed in neurons and oligodendrocytes of the spinal cord. Expressed weakly in kidney, lung and spleen. Expressed in the cortex, CA1, CA2 and CA3 of the hippocampus. Expressed in the white matter, Purkinje cells and molecular layer of the cerebellum.

It localises to the cell membrane. The protein resides in the cell projection. It is found in the nucleus. The protein localises to the cytoplasm. Involved in neural development, regulating the establishment of proper connectivity within the nervous system. Plays a role in the establishment of the anterior-posterior axis during gastrulation. Regulates the differentiation and cellular process formation of oligodendrocytes and myelination of small-diameter axons in the central nervous system (CNS). Promotes activation of focal adhesion kinase. May function as a cellular signal transducer. The sequence is that of Teneurin-4 (Tenm4) from Mus musculus (Mouse).